Here is an 89-residue protein sequence, read N- to C-terminus: Small ribosomal subunit protein uS15 (89 aa).

It belongs to the universal ribosomal protein uS15 family. In terms of assembly, part of the 30S ribosomal subunit. Forms a bridge to the 50S subunit in the 70S ribosome, contacting the 23S rRNA.

Its function is as follows. One of the primary rRNA binding proteins, it binds directly to 16S rRNA where it helps nucleate assembly of the platform of the 30S subunit by binding and bridging several RNA helices of the 16S rRNA. Functionally, forms an intersubunit bridge (bridge B4) with the 23S rRNA of the 50S subunit in the ribosome. This chain is Small ribosomal subunit protein uS15, found in Paramagnetospirillum magneticum (strain ATCC 700264 / AMB-1) (Magnetospirillum magneticum).